Here is a 255-residue protein sequence, read N- to C-terminus: Glutamate racemase (255 aa).

Substrate contacts are provided by residues 7–8 (DS) and 39–40 (YG). Cysteine 70 acts as the Proton donor/acceptor in catalysis. 71–72 (NT) contributes to the substrate binding site. The Proton donor/acceptor role is filled by cysteine 181. 182-183 (TH) contacts substrate.

This sequence belongs to the aspartate/glutamate racemases family.

It catalyses the reaction L-glutamate = D-glutamate. Its pathway is cell wall biogenesis; peptidoglycan biosynthesis. In terms of biological role, provides the (R)-glutamate required for cell wall biosynthesis. The polypeptide is Glutamate racemase (Helicobacter pylori (strain P12)).